Reading from the N-terminus, the 111-residue chain is Ig kappa chain V-III region CBPC 101 (111 aa).

The framework-1 stretch occupies residues 1–23 (DIVLTQSPASLAVSLGQRATISC). Cys23 and Cys92 are joined by a disulfide. The segment at 24 to 38 (KASQSVDYTGESYMN) is complementarity-determining-1. The tract at residues 39–53 (WYQQNPGQSPKLLIY) is framework-2. Residues 54-60 (AASNLES) form a complementarity-determining-2 region. The tract at residues 61–92 (GIPARFSGSGSGTDFTLNIHPVEEEDAATYYC) is framework-3. Residues 93–101 (QQSNEDPYT) are complementarity-determining-3. Positions 102-111 (FGGGTKLEIK) are framework-4.

The polypeptide is Ig kappa chain V-III region CBPC 101 (Mus musculus (Mouse)).